Consider the following 513-residue polypeptide: Zinc finger CCCH-type with G patch domain-containing protein (513 aa).

A C3H1-type zinc finger spans residues 155-178 (PCSYYLEGECRFDEAKCRFSHGAL). Acidic residues-rich tracts occupy residues 252–261 (DQDEDDELSS) and 273–283 (SDEAESDMDDL). A disordered region spans residues 252 to 283 (DQDEDDELSSEESTSSMRDASSDEAESDMDDL). The G-patch domain maps to 312–358 (TRGIGSKLMEKMGYIHGTGLGSEGRGIVTPVSAQILPQGRSLDACME). Disordered regions lie at residues 411–430 (PGES…NNEL) and 477–513 (QVQM…MFEF). Polar residues predominate over residues 477 to 495 (QVQMQSHKQELATLQAQER). The span at 496–513 (SLSKEQQTRKSKNKMFEF) shows a compositional bias: basic and acidic residues.

The protein resides in the nucleus. Its function is as follows. Transcription repressor. The protein is Zinc finger CCCH-type with G patch domain-containing protein of Drosophila sechellia (Fruit fly).